Here is a 290-residue protein sequence, read N- to C-terminus: Syntaxin (290 aa).

Residues 1–22 (MTKDRLAALKAAQSDDDDNDDV) are disordered. Topologically, residues 1 to 267 (MTKDRLAALK…KYQSKARRKK (267 aa)) are cytoplasmic. Residues 32-114 (MEEFFEQVDE…EEHTNKSSAD (83 aa)) are a coiled coil. The t-SNARE coiled-coil homology domain occupies 194–256 (LADIEARHND…ETAKMDTKKA (63 aa)). A helical; Anchor for type IV membrane protein transmembrane segment spans residues 268–288 (IMILVCLAILIIILVGVIGGT). At 289-290 (LG) the chain is on the extracellular side.

This sequence belongs to the syntaxin family.

Its subcellular location is the membrane. Functionally, potentially involved in docking of synaptic vesicles at presynaptic active zones. This Aplysia californica (California sea hare) protein is Syntaxin.